The following is a 520-amino-acid chain: GMP synthase [glutamine-hydrolyzing] (520 aa).

Residues 8 to 202 (RLLIIDFGSQ…FVRLAGFTGD (195 aa)) form the Glutamine amidotransferase type-1 domain. Cysteine 86 serves as the catalytic Nucleophile. Residues histidine 177 and glutamate 179 contribute to the active site. Residues 203-395 (WTMDAYREQA…LGLPASFIGR (193 aa)) enclose the GMPS ATP-PPase domain. ATP is bound at residue 230-236 (SGGVDSS).

As to quaternary structure, homodimer.

It carries out the reaction XMP + L-glutamine + ATP + H2O = GMP + L-glutamate + AMP + diphosphate + 2 H(+). Its pathway is purine metabolism; GMP biosynthesis; GMP from XMP (L-Gln route): step 1/1. Its function is as follows. Catalyzes the synthesis of GMP from XMP. The protein is GMP synthase [glutamine-hydrolyzing] of Dinoroseobacter shibae (strain DSM 16493 / NCIMB 14021 / DFL 12).